A 948-amino-acid chain; its full sequence is RNA polymerase-associated protein RapA (948 aa).

The 169-residue stretch at 164–332 (EVADRIAPRV…FARLRLLDPN (169 aa)) folds into the Helicase ATP-binding domain. Residue 177–184 (DEVGLGKT) participates in ATP binding. A DEAH box motif is present at residues 278 to 281 (DEAH). Positions 473–627 (RVEWLIDQLK…TCPTGNALQH (155 aa)) constitute a Helicase C-terminal domain.

Belongs to the SNF2/RAD54 helicase family. RapA subfamily. Interacts with the RNAP. Has a higher affinity for the core RNAP than for the holoenzyme. Its ATPase activity is stimulated by binding to RNAP.

In terms of biological role, transcription regulator that activates transcription by stimulating RNA polymerase (RNAP) recycling in case of stress conditions such as supercoiled DNA or high salt concentrations. Probably acts by releasing the RNAP, when it is trapped or immobilized on tightly supercoiled DNA. Does not activate transcription on linear DNA. Probably not involved in DNA repair. This is RNA polymerase-associated protein RapA from Pseudomonas fluorescens (strain SBW25).